Reading from the N-terminus, the 587-residue chain is MEGESVKLSSQTLIQAGDDEKNQRTITVNPAHMGKAFKVMNELRSKQLLCDVMIVAEDVEIEAHRVVLAACSPYFCAMFTGDMSESKAKKIEIKDVDGQTLSKLIDYVYTAEIEVTEENVQVLLPAASLLQLMDVRQNCCDFLQSQLHPTNCLGIRAFADVHTCTDLLQQANAYAEQHFPEVMLGEEFLSLSLDQVCSLISSDKLTVSSEEKVFEAVISWINYEKGTRLEHMAKLMEHVRLPLLPRDYLVQTVEEEALIKNNNTCKDFLIEAMKYHLLPLDQRLLIKNPRTKPRTPVSLPKVMIVVGGQAPKAIRSVECYDFEEDRWDQIAELPSRRCRAGVVFMAGHVYAVGGFNGSLRVRTVDVYDGVKDQWTSIASMQERRSTLGAAVLNDLLYAVGGFDGSTGLASVEAYSYKTNEWFFVAPMNTRRSSVGVGVVEGKLYAVGGYDGASRQCLSTVEQYNPATNEWIYVADMSTRRSGAGVGVLSGQLYATGGHDGPLVRKSVEVYDPGTNTWKQVADMNMCRRNAGVCAVNGLLYVVGGDDGSCNLASVEYYNPVTDKWTLLPTNMSTGRSYAGVAVIHKSL.

At serine 10 the chain carries Phosphoserine. A BTB domain is found at 50–117 (CDVMIVAEDV…VYTAEIEVTE (68 aa)). One can recognise a BACK domain in the interval 152 to 254 (CLGIRAFADV…PRDYLVQTVE (103 aa)). Threonine 295 carries the phosphothreonine modification. Kelch repeat units lie at residues 302–347 (VMIV…FMAG), 348–394 (HVYA…VLND), 396–441 (LYAV…VVEG), 442–490 (KLYA…VLSG), 491–537 (QLYA…AVNG), and 539–585 (LYVV…VIHK). The residue at position 375 (threonine 375) is a Phosphothreonine. Residues serine 376 and serine 433 each carry the phosphoserine modification.

The protein belongs to the KLHL3 family. As to quaternary structure, homodimer. Component of the BCR(KLHL3) E3 ubiquitin ligase complex, at least composed of CUL3 and KLHL3 and RBX1. Interacts with CLDN8. Phosphorylation at Ser-433 by PKA or PKC decreases the interaction with WNK1 and WNK4, leading to inhibit their degradation by the BCR(KLHL3) complex. Phosphorylated at Ser-433 by PKC in response to angiotensin II signaling, decreasing ability to promote degradation of WNK1 and WNK4, leading to activation of Na-Cl cotransporter SLC12A3/NCC. Phosphorylation at Ser-433 is increased by insulin. Dephosphorylated at Ser-433 by calcineurin PPP3CA, promoting degradation of WNK1 and WNK4.

The protein localises to the cytoplasm. It is found in the cytoskeleton. Its subcellular location is the cytosol. It participates in protein modification; protein ubiquitination. In terms of biological role, substrate-specific adapter of a BCR (BTB-CUL3-RBX1) E3 ubiquitin ligase complex that acts as a regulator of ion transport in the distal nephron. The BCR(KLHL3) complex acts by mediating ubiquitination and degradation of WNK1 and WNK4, two activators of Na-Cl cotransporter SLC12A3/NCC in distal convoluted tubule cells of kidney, thereby regulating NaCl reabsorption. The BCR(KLHL3) complex also mediates ubiquitination and degradation of WNK3. The BCR(KLHL3) complex also mediates ubiquitination of CLDN8, a tight-junction protein required for paracellular chloride transport in the kidney, leading to its degradation. The protein is Kelch-like protein 3 (KLHL3) of Pongo abelii (Sumatran orangutan).